The chain runs to 422 residues: MANARSLVAKANNINVGSLILMALVFGSCVANGEYLGGRRGLAANSGNPTVYDITKFGAVGDGSTNTFKAFLNTWIQVCDSPVPATLLVPKGTFLAGPVIFAGPCKSKVTVNVIGTIIATTSGYATPEWFLFERVDNLVLTGTGTFHGKGEAVWKADGCGKKVQCNLPPTSLKFRNMKNVEINGISSVNAKAFHMFLVKTENVNIQNIKLTAPAESPNTDGIHLSNADNVSILDSTIATGDDCVSVGRGSNNVTVERVICGPGHGLSVGSLGKYKNEEDVSGIHVNNCTMIETDNGLRIKTWGGSDPSKAVDIKFENIIMQSVKNPIIIDQNYGSRGGDSQVAISDILFKNIRGTTITKDVVQIMCSKSVPCQGVNVVDVNLDYVGKTGGEKKSSSGGLVGALCDNANVIFGGKLSFPMCPK.

The signal sequence occupies residues 1-31 (MANARSLVAKANNINVGSLILMALVFGSCVA). PbH1 repeat units lie at residues 200–226 (TENV…HLSN), 227–248 (ADNV…SVGR), 250–270 (SNNV…SVGS), 280–301 (VSGI…RIKT), and 310–331 (AVDI…IIDQ). An N-linked (GlcNAc...) asparagine glycan is attached at Asn229. The Proton donor role is filled by Asp241. An intrachain disulfide couples Cys243 to Cys260. A glycan (N-linked (GlcNAc...) asparagine) is linked at Asn252. The active site involves His264. The N-linked (GlcNAc...) asparagine glycan is linked to Asn287. Intrachain disulfides connect Cys366–Cys372 and Cys404–Cys420.

The protein belongs to the glycosyl hydrolase 28 family.

The protein resides in the secreted. It is found in the cell wall. The catalysed reaction is [(1-&gt;4)-alpha-D-galacturonosyl](n) + H2O = alpha-D-galacturonate + [(1-&gt;4)-alpha-D-galacturonosyl](n-1). Its function is as follows. May function in depolymerizing pectin during pollen development, germination, and tube growth. Acts as an exo-polygalacturonase. This chain is Exopolygalacturonase clone GBGE184 (PGA3), found in Arabidopsis thaliana (Mouse-ear cress).